Consider the following 524-residue polypeptide: Cytochrome P450 monooxygenase patH (524 aa).

The Cytoplasmic segment spans residues 1–4 (MEPF). The helical transmembrane segment at 5–22 (LLLLLVLLPAIVLVRYAF) threads the bilayer. Residues 23–524 (TYGHRTSTMP…ADVFSRFTEG (502 aa)) lie on the Lumenal side of the membrane. N-linked (GlcNAc...) asparagine glycosylation is present at Asn-266. A heme-binding site is contributed by Cys-442.

The protein belongs to the cytochrome P450 family. Requires heme as cofactor.

Its subcellular location is the endoplasmic reticulum membrane. The catalysed reaction is 3-methylphenol + reduced [NADPH--hemoprotein reductase] + O2 = 3-hydroxybenzyl alcohol + oxidized [NADPH--hemoprotein reductase] + H2O + H(+). It participates in mycotoxin biosynthesis; patulin biosynthesis. Functionally, cytochrome P450 monooxygenase; part of the gene cluster that mediates the biosynthesis of patulin, an acetate-derived tetraketide mycotoxin produced by several fungal species that shows antimicrobial properties against several bacteria. PatH catalyzes the conversion of m-cresol into m-hydroxybenzyl alcohol. The pathway begins with the synthesis of 6-methylsalicylic acid by the polyketide synthase (PKS) patK via condensation of acetate and malonate units. The 6-methylsalicylic acid decarboxylase patG then catalyzes the decarboxylation of 6-methylsalicylic acid to yield m-cresol (also known as 3-methylphenol). These first reactions occur in the cytosol. The intermediate m-cresol is then transported into the endoplasmic reticulum where the cytochrome P450 monooxygenase patH converts it to m-hydroxybenzyl alcohol, which is further converted to gentisyl alcohol by the cytochrome P450 monooxygenase patI. The oxidoreductases patJ and patO further convert gentisyl alcohol to isoepoxydon in the vacuole. PatN catalyzes then the transformation of isoepoxydon into phyllostine. The cluster protein patF is responsible for the conversion from phyllostine to neopatulin whereas the alcohol dehydrogenase patD converts neopatulin to E-ascladiol. The steps between isoepoxydon and E-ascladiol occur in the cytosol, and E-ascladiol is probably secreted to the extracellular space by one of the cluster-specific transporters patC or patM. Finally, the secreted patulin synthase patE catalyzes the conversion of E-ascladiol to patulin. The sequence is that of Cytochrome P450 monooxygenase patH from Penicillium expansum (Blue mold rot fungus).